Here is a 201-residue protein sequence, read N- to C-terminus: Recombination protein RecR (201 aa).

The C4-type zinc finger occupies 60-75; it reads CHECGNVDTSDPCTIC. Residues 83-178 form the Toprim domain; that stretch reads SILVVVEDVS…KVTKLAHGVP (96 aa).

Belongs to the RecR family.

Its function is as follows. May play a role in DNA repair. It seems to be involved in an RecBC-independent recombinational process of DNA repair. It may act with RecF and RecO. This is Recombination protein RecR from Methylobacterium nodulans (strain LMG 21967 / CNCM I-2342 / ORS 2060).